Consider the following 64-residue polypeptide: Beta-insect excitatory toxin OdTx12 (64 aa).

Positions 1-59 constitute an LCN-type CS-alpha/beta domain; the sequence is QSTGGKAPECLLSNYCNNECTKVHYADKGYCCLLSCYCFGLSDDKKVLEISDSRKKYCD. 4 disulfides stabilise this stretch: Cys-10-Cys-31, Cys-16-Cys-36, Cys-20-Cys-38, and Cys-32-Cys-58.

It belongs to the long (4 C-C) scorpion toxin superfamily. Sodium channel inhibitor family. Beta subfamily. Expressed by the venom gland.

The protein localises to the secreted. Functionally, excitatory insect beta-toxins induce a spastic paralysis. They bind voltage-independently at site-4 of sodium channels (Nav) and shift the voltage of activation toward more negative potentials thereby affecting sodium channel activation and promoting spontaneous and repetitive firing. In vivo, this recombinant protein is lethal to Locusta migratoria larvae after injection, but has no significant effect when orally administered. Is not toxic to mice after intracerebroventricular injection. This is Beta-insect excitatory toxin OdTx12 from Odontobuthus doriae (Yellow Iranian scorpion).